The primary structure comprises 386 residues: Succinate--CoA ligase [ADP-forming] subunit beta (386 aa).

Residues 9 to 244 (KEILRKYGVP…HDEEDPLETR (236 aa)) form the ATP-grasp domain. ATP is bound by residues K46, 53–55 (GRG), E99, C102, and E107. Mg(2+)-binding residues include N199 and D213. Residues N264 and 321–323 (GIM) each bind substrate.

It belongs to the succinate/malate CoA ligase beta subunit family. Heterotetramer of two alpha and two beta subunits. Mg(2+) is required as a cofactor.

It carries out the reaction succinate + ATP + CoA = succinyl-CoA + ADP + phosphate. The enzyme catalyses GTP + succinate + CoA = succinyl-CoA + GDP + phosphate. Its pathway is carbohydrate metabolism; tricarboxylic acid cycle; succinate from succinyl-CoA (ligase route): step 1/1. In terms of biological role, succinyl-CoA synthetase functions in the citric acid cycle (TCA), coupling the hydrolysis of succinyl-CoA to the synthesis of either ATP or GTP and thus represents the only step of substrate-level phosphorylation in the TCA. The beta subunit provides nucleotide specificity of the enzyme and binds the substrate succinate, while the binding sites for coenzyme A and phosphate are found in the alpha subunit. This Rickettsia akari (strain Hartford) protein is Succinate--CoA ligase [ADP-forming] subunit beta.